The primary structure comprises 209 residues: Orotate phosphoribosyltransferase (209 aa).

5-phospho-alpha-D-ribose 1-diphosphate-binding positions include Arg-96, Lys-100, His-102, and 122–130 (EDLISTGGS). Ser-126 is a binding site for orotate.

This sequence belongs to the purine/pyrimidine phosphoribosyltransferase family. PyrE subfamily. As to quaternary structure, homodimer. The cofactor is Mg(2+).

The catalysed reaction is orotidine 5'-phosphate + diphosphate = orotate + 5-phospho-alpha-D-ribose 1-diphosphate. Its pathway is pyrimidine metabolism; UMP biosynthesis via de novo pathway; UMP from orotate: step 1/2. Its function is as follows. Catalyzes the transfer of a ribosyl phosphate group from 5-phosphoribose 1-diphosphate to orotate, leading to the formation of orotidine monophosphate (OMP). This chain is Orotate phosphoribosyltransferase, found in Lactococcus lactis subsp. lactis (strain IL1403) (Streptococcus lactis).